A 303-amino-acid chain; its full sequence is Recombination-associated protein RdgC (303 aa).

It belongs to the RdgC family.

It is found in the cytoplasm. The protein resides in the nucleoid. Its function is as follows. May be involved in recombination. The protein is Recombination-associated protein RdgC of Pseudoalteromonas translucida (strain TAC 125).